The following is a 309-amino-acid chain: Aspartate carbamoyltransferase catalytic subunit (309 aa).

Carbamoyl phosphate is bound by residues Arg58 and Thr59. Lys86 contributes to the L-aspartate binding site. 3 residues coordinate carbamoyl phosphate: Arg108, His136, and Gln139. L-aspartate is bound by residues Arg169 and Arg223. The carbamoyl phosphate site is built by Gly265 and Pro266.

Belongs to the aspartate/ornithine carbamoyltransferase superfamily. ATCase family. In terms of assembly, heterododecamer (2C3:3R2) of six catalytic PyrB chains organized as two trimers (C3), and six regulatory PyrI chains organized as three dimers (R2).

It carries out the reaction carbamoyl phosphate + L-aspartate = N-carbamoyl-L-aspartate + phosphate + H(+). The protein operates within pyrimidine metabolism; UMP biosynthesis via de novo pathway; (S)-dihydroorotate from bicarbonate: step 2/3. Catalyzes the condensation of carbamoyl phosphate and aspartate to form carbamoyl aspartate and inorganic phosphate, the committed step in the de novo pyrimidine nucleotide biosynthesis pathway. The polypeptide is Aspartate carbamoyltransferase catalytic subunit (Akkermansia muciniphila (strain ATCC BAA-835 / DSM 22959 / JCM 33894 / BCRC 81048 / CCUG 64013 / CIP 107961 / Muc)).